A 200-amino-acid polypeptide reads, in one-letter code: Protein RISC-INTERACTING CLEARING 3'-5' EXORIBONUCLEASE 1 (200 aa).

3 oligomerization regions span residues 35 to 66, 102 to 127, and 166 to 173; these read SKILEDSVWNGNRSIVFDVYWDVKSVSTKSEW, KFVTFVGVQIQEDLALLKENHGIVIR, and DSIQSKWD.

The protein belongs to the RICE family. As to quaternary structure, homohexamer with DnaQ-like exonuclease fold in a ring-shaped structure with a central cavity. Component of AGO1 and AGO10-centered RNA-induced silencing complexes (RISC). Interacts with and acts as a cofactor of AGO1 and AGO10. Ubiquitously expressed throughout development in germinating seeds, cotyledons, leaves and roots of young seedlings and adult plants, stems and inflorescence.

The protein resides in the cytoplasm. The catalysed reaction is Exonucleolytic cleavage in the 3'- to 5'-direction to yield nucleoside 5'-phosphates.. In terms of biological role, 3'-to-5' exoribonuclease (RNase) specifically targeting single-stranded RNAs. Triggers miRNA accumulation in RNA-induced silencing complex (RISC), composed of miRNAs and AGO proteins, by degrading uridylated cleavage fragments. Required during plant growth and development. This Arabidopsis thaliana (Mouse-ear cress) protein is Protein RISC-INTERACTING CLEARING 3'-5' EXORIBONUCLEASE 1.